Consider the following 64-residue polypeptide: Disintegrin lebein-1-beta (64 aa).

The region spanning 1 to 64 is the Disintegrin domain; the sequence is NSGNPCCDPV…SDCPRNPYKD (64 aa). Cystine bridges form between Cys-6–Cys-29, Cys-20–Cys-26, Cys-25–Cys-50, and Cys-38–Cys-57. A Cell attachment site motif is present at residues 42 to 44; sequence RGD.

Belongs to the disintegrin family. Dimeric disintegrin subfamily. In terms of assembly, heterodimer with subunit alpha; disulfide-linked. As to expression, expressed by the venom gland.

It is found in the secreted. Functionally, strongly inhibits ADP-induced platelet aggregation on human platelet-rich plasma. Also avidly binds to the laminin-binding beta-1 integrins (alpha-3/beta-1, alpha-6/beta-1, and alpha-7/beta-1) in an RGD-independent manner. The polypeptide is Disintegrin lebein-1-beta (Macrovipera lebetinus (Levantine viper)).